The sequence spans 151 residues: ALK and LTK ligand 2 (151 aa).

The first 25 residues, 1 to 25 (MRVSGRPMLLALLLLLSTVGDRGRA), serve as a signal peptide directing secretion. Intrachain disulfides connect Cys112-Cys148 and Cys126-Cys135.

It belongs to the ALKAL family. Homodimer.

The protein resides in the secreted. Its subcellular location is the cell membrane. Functionally, cytokine that acts as a physiological ligand for receptor tyrosine kinases LTK and ALK, leading to their activation. Cytokine-binding is sufficient to activate LTK. In contrast, ALKAL2-driven activation of ALK is coupled with heparin-binding to ALK. Stimulation of ALK signaling is involved in neural development and regulation of energy expenditure. This Mus musculus (Mouse) protein is ALK and LTK ligand 2.